The following is a 143-amino-acid chain: uncharacterized protein (143 aa).

Transmembrane regions (helical) follow at residues 7 to 29 (LFLF…LSLV), 52 to 74 (FSLY…NTYL), 87 to 105 (LGVF…LWAG), and 120 to 142 (WLGI…IRLG).

The protein resides in the cell membrane. This is an uncharacterized protein from Aquifex aeolicus (strain VF5).